We begin with the raw amino-acid sequence, 544 residues long: ATP synthase subunit alpha (544 aa).

173–180 (GDRQTGKT) contributes to the ATP binding site. A disordered region spans residues 513-544 (GSDGQIIGGGEPESDGEDVDVEQEQIVRQKRG). The span at 524–535 (PESDGEDVDVEQ) shows a compositional bias: acidic residues.

This sequence belongs to the ATPase alpha/beta chains family. F-type ATPases have 2 components, CF(1) - the catalytic core - and CF(0) - the membrane proton channel. CF(1) has five subunits: alpha(3), beta(3), gamma(1), delta(1), epsilon(1). CF(0) has three main subunits: a(1), b(2) and c(9-12). The alpha and beta chains form an alternating ring which encloses part of the gamma chain. CF(1) is attached to CF(0) by a central stalk formed by the gamma and epsilon chains, while a peripheral stalk is formed by the delta and b chains.

The protein localises to the cell membrane. The enzyme catalyses ATP + H2O + 4 H(+)(in) = ADP + phosphate + 5 H(+)(out). Produces ATP from ADP in the presence of a proton gradient across the membrane. The alpha chain is a regulatory subunit. The protein is ATP synthase subunit alpha of Beutenbergia cavernae (strain ATCC BAA-8 / DSM 12333 / CCUG 43141 / JCM 11478 / NBRC 16432 / NCIMB 13614 / HKI 0122).